We begin with the raw amino-acid sequence, 157 residues long: MFDILMYLFENYVHSEIELLVDEDELTKELTRAGFHQVDIIKALSWLEHLADLQESDKPYLCNHAQHSFRIYTKAEMAKLDVECRGFLLFLEQIQVLSVETREMVIDRVMELDEPTLELEDLKWVVLMVLFNVPGNESAYEQMEDLIFEQPEGRLHS.

The protein belongs to the Smg family.

The polypeptide is Protein Smg homolog (Shewanella frigidimarina (strain NCIMB 400)).